A 465-amino-acid polypeptide reads, in one-letter code: Serine/threonine-protein kinase AtPK1/AtPK6 (465 aa).

An LVxCxE motif motif is present at residues 91–96; the sequence is LVECLE. The 256-residue stretch at 134-389 folds into the Protein kinase domain; sequence FEVMKVVGKG…AEEIKQHKWF (256 aa). ATP is bound by residues 140 to 148 and Lys163; that span reads VGKGAFGKV. Asp257 serves as the catalytic Proton acceptor. An activation loop region spans residues 275–301; that stretch reads DFGLAKEFEENTRSNSMCGTTEYMAPE. A Phosphoserine; by PDPK1 modification is found at Ser290. An AGC-kinase C-terminal domain is found at 390 to 460; that stretch reads KGINWKKLEA…VRPPPSFLHQ (71 aa). Position 449 is a phosphothreonine; by TOR (Thr449).

Belongs to the protein kinase superfamily. AGC Ser/Thr protein kinase family. S6 kinase subfamily. As to quaternary structure, interacts with RAPTOR1. Interacts with RBR1-E2FB complex through its LVxCxE motif. Interacts with TAP46. Binds to MRF1. Undergoes serine-specific autophosphorylation. Phosphorylated at Thr-449 by TOR. As to expression, expressed in all tissues.

The protein resides in the cytoplasm. It localises to the nucleus. The catalysed reaction is L-seryl-[protein] + ATP = O-phospho-L-seryl-[protein] + ADP + H(+). It carries out the reaction L-threonyl-[protein] + ATP = O-phospho-L-threonyl-[protein] + ADP + H(+). With respect to regulation, activated by PDK1. Repressed during osmotic stress. In terms of biological role, downstream effector of TOR signaling pathway involved in osmotic stress response. Could be involved in the control of plant growth and development. Phosphorylates the ribosomal proteins P14, P16 and S6. Functions as a repressor of cell proliferation and required for maintenance of chromosome stability and ploidy levels through the RBR1-E2F pathway. Mediates the phosphorylation of MRFs (e.g. MRF1). In Arabidopsis thaliana (Mouse-ear cress), this protein is Serine/threonine-protein kinase AtPK1/AtPK6.